The following is a 329-amino-acid chain: Thiamine thiazole synthase (329 aa).

Residues cysteine 86, 107 to 108 (EA), glycine 115, and valine 180 each bind substrate. Cysteine 218 carries the post-translational modification 2,3-didehydroalanine (Cys). Substrate is bound by residues aspartate 220, histidine 235, methionine 287, and 297 to 299 (RMG).

The protein belongs to the THI4 family. As to quaternary structure, homooctamer. Fe cation is required as a cofactor. During the catalytic reaction, a sulfide is transferred from Cys-218 to a reaction intermediate, generating a dehydroalanine residue.

The protein resides in the cytoplasm. Its subcellular location is the nucleus. It carries out the reaction [ADP-thiazole synthase]-L-cysteine + glycine + NAD(+) = [ADP-thiazole synthase]-dehydroalanine + ADP-5-ethyl-4-methylthiazole-2-carboxylate + nicotinamide + 3 H2O + 2 H(+). Involved in biosynthesis of the thiamine precursor thiazole. Catalyzes the conversion of NAD and glycine to adenosine diphosphate 5-(2-hydroxyethyl)-4-methylthiazole-2-carboxylic acid (ADT), an adenylated thiazole intermediate. The reaction includes an iron-dependent sulfide transfer from a conserved cysteine residue of the protein to a thiazole intermediate. The enzyme can only undergo a single turnover, which suggests it is a suicide enzyme. May have additional roles in adaptation to various stress conditions and in DNA damage tolerance. This chain is Thiamine thiazole synthase, found in Phaeosphaeria nodorum (strain SN15 / ATCC MYA-4574 / FGSC 10173) (Glume blotch fungus).